A 1043-amino-acid chain; its full sequence is BAG family molecular chaperone regulator 6 (1043 aa).

5 disordered regions span residues 253–294, 311–331, 343–366, 410–500, and 533–566; these read KEEL…GKTV, DVKEAQNQKNKEEPGQVPYPI, VEASESKESSNEGRNLESCPSDLH, NIPV…AESR, and SVESNSNLQEESNGEIIKPCEAKENREQPAKKSF. Basic and acidic residues-rich tracts occupy residues 311-324, 343-357, 416-443, and 478-487; these read DVKEAQNQKNKEEP, VEASESKESSNEGRN, SENHLPKPTEPTKRIAKNEPVKSTKKEQ, and KRMEKSKETK. Residues 534–543 show a composition bias toward polar residues; sequence VESNSNLQEE. Basic and acidic residues predominate over residues 550–566; the sequence is KPCEAKENREQPAKKSF. Positions 568–597 constitute an IQ domain; that stretch reads EEEAARIIQSMYRGYDVRRWEPIKKLKEIA. The BAG domain maps to 595–672; it reads EIATVREQMG…SIQDKLDSLK (78 aa). The segment covering 724-741 has biased composition (basic and acidic residues); it reads SPEEHPMSVLNRTDEKQA. Disordered regions lie at residues 724–749, 764–799, 817–975, and 1015–1043; these read SPEEHPMSVLNRTDEKQAESAAETEE, ATENAAAASSTTIPEKIGEVETVVPGNPPSADGNGM, EPIN…ISKE, and EKKLSHKKKTQIRRRASKPMSVSPTDAVL. Residues 840–852 are compositionally biased toward low complexity; sequence ASEVSEAETNSSE. The segment covering 853–871 has biased composition (basic and acidic residues); it reads NENRKGEDDIVLHSEKNVE. Polar residues-rich tracts occupy residues 885–899 and 919–932; these read QPLSQDPSSSYTREG and SPNNSKGIGQQTSE. The segment covering 934–951 has biased composition (basic and acidic residues); that stretch reads QDEKEQSPETEVIVKEQP. Positions 971–1024 form a coiled coil; sequence GISKETKKLMEENQRFKETMETLVKAGREQLEVISKLTSRVKSLEKKLSHKKKT. Basic residues predominate over residues 1018–1031; the sequence is LSHKKKTQIRRRAS. Polar residues predominate over residues 1034 to 1043; sequence MSVSPTDAVL.

In terms of assembly, binds to the ATPase domain of HSP70/HSC70 chaperones. Interacts with calmodulins CAM1, CAM2, CAM3, CAM4, CAM6 and CAM7. Interacts with BAGP1 and APCB1. Detected in stems, leaves, flowers and roots.

In terms of biological role, co-chaperone that regulates diverse cellular pathways, such as programmed cell death and stress responses. Involved in plant basal resistance. Involved in basal heat response through the regulation of the heat induced small HSP (sHSP) transcriptional cascade. Induces autophagy. The polypeptide is BAG family molecular chaperone regulator 6 (Arabidopsis thaliana (Mouse-ear cress)).